Consider the following 82-residue polypeptide: Toxin GTx1-15 (82 aa).

The first 21 residues, 1–21 (MKTSVVFVIAGLALLSVACYA), serve as a signal peptide directing secretion. A propeptide spanning residues 22–46 (SELKEQSSINEVLSTIFHFEQPEER) is cleaved from the precursor. Cystine bridges form between cysteine 48/cysteine 63, cysteine 55/cysteine 69, and cysteine 62/cysteine 76. At phenylalanine 80 the chain carries Phenylalanine amide.

This sequence belongs to the neurotoxin 10 (Hwtx-1) family. 08 (Gtx1-15) subfamily. Expressed by the venom gland.

The protein localises to the secreted. Potent voltage-gated sodium channel blocker. Potently inhibits the voltage-gated sodium channels Nav1.7/SCN9A (IC(50)=0.58-10 nM). Shows a moderate activity on Nav1.1/SCN1A (IC(50)=6 nM), Nav1.2/SCN2A (IC(50)=5-128 nM), Nav1.3/SCN3A (IC(50)=20.3-170 nM), and Nav1.6/SCN8A (IC(50)=17-20.1 nM). Shows an unclear inhibition of Nav1.4/SCN4A (IC(50)=200 nM to &gt;10 uM), Nav1.5/SCN5A (IC(50)=140 nM to &gt;10 uM) and Nav1.8/SCN10A (IC(50)=68-12200 nM). Weakly blocks the low voltage-gated calcium channels Cav3.1/CACNA1G (30% inhibition of the peak current by 9.8 nM of the toxin). It shows moderate affinity for lipid bilayers. The chain is Toxin GTx1-15 from Grammostola rosea (Chilean rose tarantula).